Here is a 120-residue protein sequence, read N- to C-terminus: UPF0344 protein lin2366 (120 aa).

Transmembrane regions (helical) follow at residues G3–I23, M33–V53, I62–L82, and G92–L112.

This sequence belongs to the UPF0344 family.

It localises to the cell membrane. In Listeria innocua serovar 6a (strain ATCC BAA-680 / CLIP 11262), this protein is UPF0344 protein lin2366.